A 314-amino-acid chain; its full sequence is Elongator complex protein 5 (314 aa).

It belongs to the ELP5 family. As to quaternary structure, component of the elongator complex.

Its subcellular location is the cytoplasm. It localises to the nucleus. The protein operates within tRNA modification; 5-methoxycarbonylmethyl-2-thiouridine-tRNA biosynthesis. In terms of biological role, component of the elongator complex, a multiprotein complex which is required for multiple tRNA modifications, including mcm5U (5-methoxycarbonylmethyl uridine), mcm5s2U (5-methoxycarbonylmethyl-2-thiouridine), and ncm5U (5-carbamoylmethyl uridine). The elongator complex catalyzes formation of carboxymethyluridine in the wobble base at position 34 in tRNAs. This Schizosaccharomyces pombe (strain 972 / ATCC 24843) (Fission yeast) protein is Elongator complex protein 5 (iki1).